Reading from the N-terminus, the 163-residue chain is Cytosolic iron-sulfur assembly component 2B (163 aa).

This sequence belongs to the MIP18 family.

Its subcellular location is the nucleus. The protein localises to the cytoplasm. It localises to the cytoskeleton. It is found in the spindle. Component of the cytosolic iron-sulfur (Fe/S) protein assembly machinery. Required for the maturation of extramitochondrial Fe/S proteins. May play a role in chromosome segregation through establishment of sister chromatid cohesion. This Dictyostelium discoideum (Social amoeba) protein is Cytosolic iron-sulfur assembly component 2B.